A 502-amino-acid chain; its full sequence is Maturase K (502 aa).

It belongs to the intron maturase 2 family. MatK subfamily.

The protein resides in the plastid. It localises to the chloroplast. Functionally, usually encoded in the trnK tRNA gene intron. Probably assists in splicing its own and other chloroplast group II introns. This chain is Maturase K, found in Arabis blepharophylla (Coast rock-cress).